The chain runs to 369 residues: Dual-specificity RNA methyltransferase RlmN (369 aa).

Residue glutamate 94 is the Proton acceptor of the active site. The region spanning 113-346 is the Radical SAM core domain; sequence ESEKWTMCLS…CTIRESRGID (234 aa). Residues cysteine 120 and cysteine 351 are joined by a disulfide bond. 3 residues coordinate [4Fe-4S] cluster: cysteine 127, cysteine 131, and cysteine 134. S-adenosyl-L-methionine is bound by residues 177-178, serine 209, 232-234, and asparagine 308; these read GE and SLH. Cysteine 351 serves as the catalytic S-methylcysteine intermediate.

Belongs to the radical SAM superfamily. RlmN family. [4Fe-4S] cluster serves as cofactor.

The protein resides in the cytoplasm. It carries out the reaction adenosine(2503) in 23S rRNA + 2 reduced [2Fe-2S]-[ferredoxin] + 2 S-adenosyl-L-methionine = 2-methyladenosine(2503) in 23S rRNA + 5'-deoxyadenosine + L-methionine + 2 oxidized [2Fe-2S]-[ferredoxin] + S-adenosyl-L-homocysteine. It catalyses the reaction adenosine(37) in tRNA + 2 reduced [2Fe-2S]-[ferredoxin] + 2 S-adenosyl-L-methionine = 2-methyladenosine(37) in tRNA + 5'-deoxyadenosine + L-methionine + 2 oxidized [2Fe-2S]-[ferredoxin] + S-adenosyl-L-homocysteine. Functionally, specifically methylates position 2 of adenine 2503 in 23S rRNA and position 2 of adenine 37 in tRNAs. m2A2503 modification seems to play a crucial role in the proofreading step occurring at the peptidyl transferase center and thus would serve to optimize ribosomal fidelity. The protein is Dual-specificity RNA methyltransferase RlmN of Helicobacter hepaticus (strain ATCC 51449 / 3B1).